We begin with the raw amino-acid sequence, 127 residues long: Peroxiredoxin-2 (127 aa).

The 125-residue stretch at 1–125 (LFFYPLDFTF…ALRLVQGXQY (125 aa)) folds into the Thioredoxin domain. The active-site Cysteine sulfenic acid (-SOH) intermediate is C12. A Phosphoserine modification is found at S73.

Belongs to the peroxiredoxin family. AhpC/Prx1 subfamily. Homodimer; disulfide-linked, upon oxidation. 5 homodimers assemble to form a ring-like decamer. Interacts with TIPIN. The enzyme can be inactivated by further oxidation of the cysteine sulfenic acid (C(P)-SOH) to sulphinic acid (C(P)-SO2H) instead of its condensation to a disulfide bond. It can be reactivated by forming a transient disulfide bond with sulfiredoxin SRXN1, which reduces the cysteine sulfinic acid in an ATP- and Mg-dependent manner. In terms of processing, acetylation increases resistance to transition to high molecular-mass complexes. Deacetylated by HDAC6 which decreases reducing activity.

It localises to the cytoplasm. It catalyses the reaction a hydroperoxide + [thioredoxin]-dithiol = an alcohol + [thioredoxin]-disulfide + H2O. Thiol-specific peroxidase that catalyzes the reduction of hydrogen peroxide and organic hydroperoxides to water and alcohols, respectively. Plays a role in cell protection against oxidative stress by detoxifying peroxides and as sensor of hydrogen peroxide-mediated signaling events. Might participate in the signaling cascades of growth factors and tumor necrosis factor-alpha by regulating the intracellular concentrations of H(2)O(2). In Sus scrofa (Pig), this protein is Peroxiredoxin-2 (PRDX2).